Here is a 46-residue protein sequence, read N- to C-terminus: Protein YmiA (46 aa).

The helical transmembrane segment at 22-42 (AWLAVFLGSALFWVVVALLIW) threads the bilayer.

The protein resides in the cell inner membrane. This chain is Protein YmiA (ymiA), found in Escherichia coli (strain K12).